The chain runs to 450 residues: ATP-dependent protease ATPase subunit HslU (450 aa).

ATP-binding positions include valine 29, 71 to 76 (GVGKTE), aspartate 261, glutamate 328, and arginine 400.

Belongs to the ClpX chaperone family. HslU subfamily. In terms of assembly, a double ring-shaped homohexamer of HslV is capped on each side by a ring-shaped HslU homohexamer. The assembly of the HslU/HslV complex is dependent on binding of ATP.

It localises to the cytoplasm. Its function is as follows. ATPase subunit of a proteasome-like degradation complex; this subunit has chaperone activity. The binding of ATP and its subsequent hydrolysis by HslU are essential for unfolding of protein substrates subsequently hydrolyzed by HslV. HslU recognizes the N-terminal part of its protein substrates and unfolds these before they are guided to HslV for hydrolysis. The polypeptide is ATP-dependent protease ATPase subunit HslU (Rickettsia akari (strain Hartford)).